Reading from the N-terminus, the 132-residue chain is Ribosome-binding factor A (132 aa).

Belongs to the RbfA family. Monomer. Binds 30S ribosomal subunits, but not 50S ribosomal subunits or 70S ribosomes.

The protein resides in the cytoplasm. Its function is as follows. One of several proteins that assist in the late maturation steps of the functional core of the 30S ribosomal subunit. Associates with free 30S ribosomal subunits (but not with 30S subunits that are part of 70S ribosomes or polysomes). Required for efficient processing of 16S rRNA. May interact with the 5'-terminal helix region of 16S rRNA. The sequence is that of Ribosome-binding factor A from Treponema denticola (strain ATCC 35405 / DSM 14222 / CIP 103919 / JCM 8153 / KCTC 15104).